The sequence spans 78 residues: COP9 signalosome complex subunit 5b (78 aa).

The protein belongs to the peptidase M67A family. CSN5 subfamily. In terms of assembly, component of the CSN complex, probably composed of CSN1, CSN2, CSN3, CSN4, CSN5 (CSN5A or CSN5B), CSN6 (CSN6A or CSN6B), CSN7 and CSN8. It depends on a divalent metal cation as a cofactor.

It is found in the cytoplasm. It localises to the nucleus. Probable protease subunit of the COP9 signalosome complex (CSN), a complex involved in various cellular and developmental processes such as photomorphogenesis and auxin and jasmonate responses. The CSN complex is an essential regulator of the ubiquitin (Ubl) conjugation pathway by mediating the deneddylation of the cullin subunits of the SCF-type E3 ligase complexes, leading to decrease the Ubl ligase activity of SCF. In the complex, it probably acts as the catalytic center that mediates the cleavage of Nedd8 from cullins. It however has no metalloprotease activity by itself and requires the other subunits of the CSN complex. The CSN complex is involved in repression of photomorphogenesis in darkness by regulating the activity of COP1-containing Ubl ligase complexes. This Brassica oleracea (Wild cabbage) protein is COP9 signalosome complex subunit 5b (CSN5B).